We begin with the raw amino-acid sequence, 569 residues long: Beta-lactamase-like protein 4 (569 aa).

The first 19 residues, 1–19 (MKYYLYLFLLFTFANLLYS), serve as a signal peptide directing secretion. N-linked (GlcNAc...) asparagine glycans are attached at residues Asn-87, Asn-172, Asn-239, Asn-240, Asn-250, Asn-299, Asn-343, Asn-412, Asn-419, Asn-436, Asn-468, Asn-509, and Asn-535.

Belongs to the beta-lactamase family.

It is found in the secreted. The sequence is that of Beta-lactamase-like protein 4 from Dictyostelium discoideum (Social amoeba).